The chain runs to 269 residues: MSQQNGNVNRVGAQDRVGASGGMEHSFGFKAVDENEKQGLVNDVFHKVAKRYDIMNDLMSAGMHRVWKDAMVAWLAPSKRPGWTSLDVAGGTGDIAFRIVEVSGRQAHVTILDINGSMLGVGRERAIKKGLIDNLEFVEANAEELPFEDNSFDAYTIAFGIRNVPHIDKALSEAYRVLKPGGRFLCLEFSEVELPVLDKVYDEWSFRAIPRIGKMITGDADSYSYLVESIRKFPKQQDFAAMIEKAGFERVSYRNFTGGIAALHSGWKL.

S-adenosyl-L-methionine is bound by residues T92, D113, and N141 to A142.

It belongs to the class I-like SAM-binding methyltransferase superfamily. MenG/UbiE family.

The enzyme catalyses a 2-demethylmenaquinol + S-adenosyl-L-methionine = a menaquinol + S-adenosyl-L-homocysteine + H(+). It carries out the reaction a 2-methoxy-6-(all-trans-polyprenyl)benzene-1,4-diol + S-adenosyl-L-methionine = a 5-methoxy-2-methyl-3-(all-trans-polyprenyl)benzene-1,4-diol + S-adenosyl-L-homocysteine + H(+). Its pathway is quinol/quinone metabolism; menaquinone biosynthesis; menaquinol from 1,4-dihydroxy-2-naphthoate: step 2/2. The protein operates within cofactor biosynthesis; ubiquinone biosynthesis. In terms of biological role, methyltransferase required for the conversion of demethylmenaquinol (DMKH2) to menaquinol (MKH2) and the conversion of 2-polyprenyl-6-methoxy-1,4-benzoquinol (DDMQH2) to 2-polyprenyl-3-methyl-6-methoxy-1,4-benzoquinol (DMQH2). This is Ubiquinone/menaquinone biosynthesis C-methyltransferase UbiE from Brucella canis (strain ATCC 23365 / NCTC 10854 / RM-666).